Reading from the N-terminus, the 276-residue chain is Formamidopyrimidine-DNA glycosylase (276 aa).

The active-site Schiff-base intermediate with DNA is proline 2. The Proton donor role is filled by glutamate 3. Lysine 60 (proton donor; for beta-elimination activity) is an active-site residue. Residues histidine 93 and arginine 112 each coordinate DNA. Residues 240-274 (NVYGKKGEPCVTCGTILEKTVVGGRGTHYCPICQP) form an FPG-type zinc finger. Arginine 264 serves as the catalytic Proton donor; for delta-elimination activity.

It belongs to the FPG family. Monomer. Requires Zn(2+) as cofactor.

The catalysed reaction is Hydrolysis of DNA containing ring-opened 7-methylguanine residues, releasing 2,6-diamino-4-hydroxy-5-(N-methyl)formamidopyrimidine.. It catalyses the reaction 2'-deoxyribonucleotide-(2'-deoxyribose 5'-phosphate)-2'-deoxyribonucleotide-DNA = a 3'-end 2'-deoxyribonucleotide-(2,3-dehydro-2,3-deoxyribose 5'-phosphate)-DNA + a 5'-end 5'-phospho-2'-deoxyribonucleoside-DNA + H(+). In terms of biological role, involved in base excision repair of DNA damaged by oxidation or by mutagenic agents. Acts as a DNA glycosylase that recognizes and removes damaged bases. Has a preference for oxidized purines, such as 7,8-dihydro-8-oxoguanine (8-oxoG). Has AP (apurinic/apyrimidinic) lyase activity and introduces nicks in the DNA strand. Cleaves the DNA backbone by beta-delta elimination to generate a single-strand break at the site of the removed base with both 3'- and 5'-phosphates. This chain is Formamidopyrimidine-DNA glycosylase, found in Bacillus cereus (strain ATCC 14579 / DSM 31 / CCUG 7414 / JCM 2152 / NBRC 15305 / NCIMB 9373 / NCTC 2599 / NRRL B-3711).